A 194-amino-acid chain; its full sequence is Adenylate kinase (194 aa).

Glycine 10–threonine 15 serves as a coordination point for ATP. Residues serine 30–valine 59 form an NMP region. Residues threonine 31, arginine 36, glutamate 57–valine 59, glycine 85–arginine 88, and glutamine 92 each bind AMP. The interval lysine 126 to aspartate 142 is LID. Arginine 127 serves as a coordination point for ATP. The AMP site is built by arginine 139 and arginine 150. ATP is bound at residue alanine 178.

It belongs to the adenylate kinase family. As to quaternary structure, monomer.

It localises to the cytoplasm. It catalyses the reaction AMP + ATP = 2 ADP. It participates in purine metabolism; AMP biosynthesis via salvage pathway; AMP from ADP: step 1/1. Its function is as follows. Catalyzes the reversible transfer of the terminal phosphate group between ATP and AMP. Plays an important role in cellular energy homeostasis and in adenine nucleotide metabolism. The chain is Adenylate kinase from Chelativorans sp. (strain BNC1).